We begin with the raw amino-acid sequence, 210 residues long: Outer-membrane lipoprotein carrier protein (210 aa).

The signal sequence occupies residues 1–23 (MLMFSRFRYIFFAVALLSGPVCA).

The protein belongs to the LolA family. As to quaternary structure, monomer.

It is found in the periplasm. Participates in the translocation of lipoproteins from the inner membrane to the outer membrane. Only forms a complex with a lipoprotein if the residue after the N-terminal Cys is not an aspartate (The Asp acts as a targeting signal to indicate that the lipoprotein should stay in the inner membrane). The sequence is that of Outer-membrane lipoprotein carrier protein from Xylella fastidiosa (strain Temecula1 / ATCC 700964).